A 1391-amino-acid polypeptide reads, in one-letter code: DNA-directed RNA polymerase subunit beta' (1391 aa).

Residues Cys-72, Cys-74, Cys-87, and Cys-90 each contribute to the Zn(2+) site. Mg(2+)-binding residues include Asp-462, Asp-464, and Asp-466. Positions 816, 890, 897, and 900 each coordinate Zn(2+).

Belongs to the RNA polymerase beta' chain family. The RNAP catalytic core consists of 2 alpha, 1 beta, 1 beta' and 1 omega subunit. When a sigma factor is associated with the core the holoenzyme is formed, which can initiate transcription. It depends on Mg(2+) as a cofactor. Zn(2+) is required as a cofactor.

It catalyses the reaction RNA(n) + a ribonucleoside 5'-triphosphate = RNA(n+1) + diphosphate. Functionally, DNA-dependent RNA polymerase catalyzes the transcription of DNA into RNA using the four ribonucleoside triphosphates as substrates. This chain is DNA-directed RNA polymerase subunit beta', found in Neisseria meningitidis serogroup B (strain ATCC BAA-335 / MC58).